We begin with the raw amino-acid sequence, 69 residues long: Disintegrin EC6 subunit beta (69 aa).

The region spanning 1–65 is the Disintegrin domain; the sequence is NSVHPCCDPV…DCPPNPWNGK (65 aa). Disulfide bonds link cysteine 6–cysteine 29, cysteine 20–cysteine 26, cysteine 25–cysteine 50, and cysteine 38–cysteine 57. A Cell attachment site motif is present at residues 42–44; that stretch reads RGD.

The protein belongs to the venom metalloproteinase (M12B) family. P-II subfamily. P-IIe sub-subfamily. Heterodimer with subunit alpha; disulfide-linked. In terms of tissue distribution, expressed by the venom gland.

It localises to the secreted. Potently inhibits adhesion of alpha-4/beta-1 (ITGA4/ITGB1) and alpha-9/beta-1 (ITGA9/ITGB1) integrins to VCAM1, and adhesion of alpha-5/beta-1 (ITGA5/ITGB1) integrin to fibronectin. Has a much less effect on alpha-IIb/beta-3 (ITGA2B/ITGB3) integrin. Also potently inhibits neutrophil migration across TNF-alpha-activated human umbilical endothelial cells. In Echis carinatus sochureki (Saw-scaled viper), this protein is Disintegrin EC6 subunit beta.